The following is a 314-amino-acid chain: NF-kappa-B inhibitor alpha (314 aa).

The segment at 1-39 (MFQPAGHGQDWAMEGPRDGLKKERLVDDRHDSGLDSMKD) is disordered. Over residues 15–39 (GPRDGLKKERLVDDRHDSGLDSMKD) the composition is skewed to basic and acidic residues. A Glycyl lysine isopeptide (Lys-Gly) (interchain with G-Cter in SUMO); alternate cross-link involves residue Lys21. Residue Lys21 forms a Glycyl lysine isopeptide (Lys-Gly) (interchain with G-Cter in ubiquitin); alternate linkage. A Glycyl lysine isopeptide (Lys-Gly) (interchain with G-Cter in ubiquitin) cross-link involves residue Lys22. Residues 30–36 (HDSGLDS) carry the Destruction motif motif. Phosphoserine; by IKKA and IKKB is present on Ser32. Ser36 is modified (phosphoserine; by IKKA, IKKB, IKKE and TBK1). Position 42 is a phosphotyrosine; by Tyr-kinases (Tyr42). Residues 45–54 (MVKELREIRL) carry the Nuclear export signal motif. The short motif at 110–120 (LQQTPLHLAVI) is the Nuclear import signal element. ANK repeat units follow at residues 110–139 (LQQT…DPEL), 143–172 (RGNT…PQHL), 182–211 (NGHT…DVNA), and 216–245 (NGRT…DVNR). 2 positions are modified to (3S)-3-hydroxyasparagine; by HIF1AN: Asn210 and Asn244. A phosphoserine; by CK2 mark is found at Ser283 and Ser288. Position 291 is a phosphothreonine; by CK2 (Thr291). Ser293 carries the phosphoserine; by CK2 modification. Thr296 bears the Phosphothreonine mark.

Belongs to the NF-kappa-B inhibitor family. As to quaternary structure, interacts with RELA; the interaction requires the nuclear import signal. Part of a 70-90 kDa complex at least consisting of CHUK, IKBKB, NFKBIA, RELA, ELP1 and MAP3K14. Interacts with NKIRAS1 and NKIRAS2. Interacts with RWDD3; the interaction enhances sumoylation. Interacts with PRMT2. Interacts with PRKACA in platelets; this interaction is disrupted by thrombin and collagen. Interacts with MEFV. Interacts with DDRGK1; positively regulates NFKBIA phosphorylation and degradation. Interacts with HNRNPA2B1; the interaction may be mediated by the RRM2 domain of HNRNPA2B1, and HNRNPA2B1 may interact simultaneously with FAM76B and either NFKBIA or NFKBIE to form a complex. Post-translationally, phosphorylated at Ser-32 and Ser-36 by IKKA/CHUK and IKKB/IKBKB; disables inhibition of NF-kappa-B DNA-binding activity. Phosphorylation at positions 32 and 36 is prerequisite to recognition by the SCF(FBXW11) and SCF(BTRC) complexes, leading to polyubiquitination and subsequent degradation. Polyubiquitinated at Lys-21 and/or Lys-22 following phosphorylation at Ser-32 and Ser-36. Monoubiquitinated at Lys-21 and/or Lys-22 by UBE2D3. Ubiquitin chain elongation is then performed by CDC34 in cooperation with the SCF(FBXW11) E3 ligase complex, building ubiquitin chains from the UBE2D3-primed NFKBIA-linked ubiquitin. The resulting polyubiquitination leads to protein degradation. Also ubiquitinated by the SCF(BTRC) complex following stimulus-dependent phosphorylation at Ser-32 and Ser-36. Deubiquitinated by USP38, leading to NF-kappa-B inhibition. In terms of processing, sumoylated; sumoylation requires the presence of the nuclear import signal. Sumoylation blocks ubiquitination and proteasome-mediated degradation of the protein thereby increasing the protein stability. Post-translationally, hydroxylated by HIF1AN.

It localises to the cytoplasm. The protein localises to the nucleus. In terms of biological role, inhibits the activity of dimeric NF-kappa-B/REL complexes by trapping REL (RELA/p65 and NFKB1/p50) dimers in the cytoplasm by masking their nuclear localization signals. On cellular stimulation by immune and pro-inflammatory responses, becomes phosphorylated promoting ubiquitination and degradation, enabling the dimeric RELA to translocate to the nucleus and activate transcription. In Rattus norvegicus (Rat), this protein is NF-kappa-B inhibitor alpha (Nfkbia).